The chain runs to 124 residues: Ribonuclease pancreatic (124 aa).

A compositionally biased stretch (basic and acidic residues) spans 1–13; it reads KESAAAKFERQHI. Residues 1–23 are disordered; sequence KESAAAKFERQHIDSSTSSVSSS. The substrate site is built by lysine 7 and arginine 10. The active-site Proton acceptor is histidine 12. 4 disulfide bridges follow: cysteine 26-cysteine 84, cysteine 40-cysteine 95, cysteine 58-cysteine 110, and cysteine 65-cysteine 72. Asparagine 34 carries an N-linked (GlcNAc...) asparagine glycan. Residues 41-45, lysine 66, and arginine 85 each bind substrate; that span reads KPVNT. Residue histidine 119 is the Proton donor of the active site.

The protein belongs to the pancreatic ribonuclease family. Monomer. Interacts with and forms tight 1:1 complexes with RNH1. Dimerization of two such complexes may occur. Interaction with RNH1 inhibits this protein. In terms of tissue distribution, pancreas.

It localises to the secreted. It carries out the reaction an [RNA] containing cytidine + H2O = an [RNA]-3'-cytidine-3'-phosphate + a 5'-hydroxy-ribonucleotide-3'-[RNA].. The catalysed reaction is an [RNA] containing uridine + H2O = an [RNA]-3'-uridine-3'-phosphate + a 5'-hydroxy-ribonucleotide-3'-[RNA].. Endonuclease that catalyzes the cleavage of RNA on the 3' side of pyrimidine nucleotides. Acts on single-stranded and double-stranded RNA. This Giraffa camelopardalis (Giraffe) protein is Ribonuclease pancreatic (RNASE1).